The chain runs to 134 residues: Probable glycine cleavage system H protein (134 aa).

The 82-residue stretch at 29-110 (TVLVGISDYA…PYENWIAKLK (82 aa)) folds into the Lipoyl-binding domain. Lysine 70 carries the post-translational modification N6-lipoyllysine.

It belongs to the GcvH family. As to quaternary structure, the glycine cleavage system is composed of four proteins: P, T, L and H. (R)-lipoate serves as cofactor.

In terms of biological role, the glycine cleavage system catalyzes the degradation of glycine. The H protein shuttles the methylamine group of glycine from the P protein to the T protein. This chain is Probable glycine cleavage system H protein, found in Thermococcus kodakarensis (strain ATCC BAA-918 / JCM 12380 / KOD1) (Pyrococcus kodakaraensis (strain KOD1)).